A 120-amino-acid polypeptide reads, in one-letter code: uncharacterized protein (120 aa).

To E.coli YiaW.

This is an uncharacterized protein from Escherichia coli (strain K12).